The primary structure comprises 887 residues: Leucine--tRNA ligase (887 aa).

Residues 48 to 58 carry the 'HIGH' region motif; the sequence is PYPSGKLHMGH. The 'KMSKS' region signature appears at 644 to 648; the sequence is TMSKS. K647 is a binding site for ATP.

The protein belongs to the class-I aminoacyl-tRNA synthetase family.

Its subcellular location is the cytoplasm. The catalysed reaction is tRNA(Leu) + L-leucine + ATP = L-leucyl-tRNA(Leu) + AMP + diphosphate. This Leptothrix cholodnii (strain ATCC 51168 / LMG 8142 / SP-6) (Leptothrix discophora (strain SP-6)) protein is Leucine--tRNA ligase.